The sequence spans 161 residues: Nucleotide-binding protein Gura_0717 (161 aa).

This sequence belongs to the YajQ family.

In terms of biological role, nucleotide-binding protein. This Geotalea uraniireducens (strain Rf4) (Geobacter uraniireducens) protein is Nucleotide-binding protein Gura_0717.